We begin with the raw amino-acid sequence, 114 residues long: Large ribosomal subunit protein uL22 (114 aa).

The protein belongs to the universal ribosomal protein uL22 family. Part of the 50S ribosomal subunit.

In terms of biological role, this protein binds specifically to 23S rRNA; its binding is stimulated by other ribosomal proteins, e.g. L4, L17, and L20. It is important during the early stages of 50S assembly. It makes multiple contacts with different domains of the 23S rRNA in the assembled 50S subunit and ribosome. Its function is as follows. The globular domain of the protein is located near the polypeptide exit tunnel on the outside of the subunit, while an extended beta-hairpin is found that lines the wall of the exit tunnel in the center of the 70S ribosome. This is Large ribosomal subunit protein uL22 from Aeromonas salmonicida (strain A449).